An 800-amino-acid polypeptide reads, in one-letter code: Phenylalanine--tRNA ligase beta subunit (800 aa).

The 116-residue stretch at 39–154 folds into the tRNA-binding domain; the sequence is TKDIKNLVVG…ESQVPGTDAL (116 aa). In terms of domain architecture, B5 spans 408 to 483; sequence AFITPIDITA…RIYGYDDIPS (76 aa). 4 residues coordinate Mg(2+): aspartate 461, aspartate 467, glutamate 470, and glutamate 471. Positions 708–800 constitute an FDX-ACB domain; that stretch reads PIFPGMSRDI…ALIEQGAVIR (93 aa).

It belongs to the phenylalanyl-tRNA synthetase beta subunit family. Type 1 subfamily. As to quaternary structure, tetramer of two alpha and two beta subunits. The cofactor is Mg(2+).

The protein resides in the cytoplasm. It carries out the reaction tRNA(Phe) + L-phenylalanine + ATP = L-phenylalanyl-tRNA(Phe) + AMP + diphosphate + H(+). This Staphylococcus aureus (strain bovine RF122 / ET3-1) protein is Phenylalanine--tRNA ligase beta subunit.